Reading from the N-terminus, the 93-residue chain is Aspartyl/glutamyl-tRNA(Asn/Gln) amidotransferase subunit C (93 aa).

This sequence belongs to the GatC family. Heterotrimer of A, B and C subunits.

It carries out the reaction L-glutamyl-tRNA(Gln) + L-glutamine + ATP + H2O = L-glutaminyl-tRNA(Gln) + L-glutamate + ADP + phosphate + H(+). The catalysed reaction is L-aspartyl-tRNA(Asn) + L-glutamine + ATP + H2O = L-asparaginyl-tRNA(Asn) + L-glutamate + ADP + phosphate + 2 H(+). In terms of biological role, allows the formation of correctly charged Asn-tRNA(Asn) or Gln-tRNA(Gln) through the transamidation of misacylated Asp-tRNA(Asn) or Glu-tRNA(Gln) in organisms which lack either or both of asparaginyl-tRNA or glutaminyl-tRNA synthetases. The reaction takes place in the presence of glutamine and ATP through an activated phospho-Asp-tRNA(Asn) or phospho-Glu-tRNA(Gln). The chain is Aspartyl/glutamyl-tRNA(Asn/Gln) amidotransferase subunit C from Methanothrix thermoacetophila (strain DSM 6194 / JCM 14653 / NBRC 101360 / PT) (Methanosaeta thermophila).